A 318-amino-acid chain; its full sequence is Protoheme IX farnesyltransferase (318 aa).

9 helical membrane passes run 33-53, 54-74, 102-122, 125-145, 154-174, 181-201, 225-245, 246-266, and 288-308; these read VMSLVVFTALVGLVAAPVSVH, PFIGFCAILFIAIGGGASGAL, GEALALGLGLSGLSVMMLALA, VLAGAFLAFTIFFYVVVYTMW, IVIGGAAGAFPPVIGWIAATG, WLMFALTFMWTPPHFWALALF, VHILIYTILLALLALGTAFSN, IGGPIYLAVALVLNALFLLGA, and FFKLSLLYLFLHFGAILAEAL.

Belongs to the UbiA prenyltransferase family. Protoheme IX farnesyltransferase subfamily. As to quaternary structure, interacts with CtaA.

The protein localises to the cell inner membrane. It carries out the reaction heme b + (2E,6E)-farnesyl diphosphate + H2O = Fe(II)-heme o + diphosphate. It functions in the pathway porphyrin-containing compound metabolism; heme O biosynthesis; heme O from protoheme: step 1/1. Its function is as follows. Converts heme B (protoheme IX) to heme O by substitution of the vinyl group on carbon 2 of heme B porphyrin ring with a hydroxyethyl farnesyl side group. This is Protoheme IX farnesyltransferase from Ruegeria pomeroyi (strain ATCC 700808 / DSM 15171 / DSS-3) (Silicibacter pomeroyi).